The sequence spans 163 residues: ATP synthase subunit b 1 (163 aa).

Residues 5 to 25 (FDATFFAFVGLILFLALVVYL) traverse the membrane as a helical segment.

Belongs to the ATPase B chain family. As to quaternary structure, F-type ATPases have 2 components, F(1) - the catalytic core - and F(0) - the membrane proton channel. F(1) has five subunits: alpha(3), beta(3), gamma(1), delta(1), epsilon(1). F(0) has three main subunits: a(1), b(2) and c(10-14). The alpha and beta chains form an alternating ring which encloses part of the gamma chain. F(1) is attached to F(0) by a central stalk formed by the gamma and epsilon chains, while a peripheral stalk is formed by the delta and b chains.

Its subcellular location is the cell inner membrane. Its function is as follows. F(1)F(0) ATP synthase produces ATP from ADP in the presence of a proton or sodium gradient. F-type ATPases consist of two structural domains, F(1) containing the extramembraneous catalytic core and F(0) containing the membrane proton channel, linked together by a central stalk and a peripheral stalk. During catalysis, ATP synthesis in the catalytic domain of F(1) is coupled via a rotary mechanism of the central stalk subunits to proton translocation. Component of the F(0) channel, it forms part of the peripheral stalk, linking F(1) to F(0). The polypeptide is ATP synthase subunit b 1 (Rhizobium etli (strain ATCC 51251 / DSM 11541 / JCM 21823 / NBRC 15573 / CFN 42)).